The following is a 410-amino-acid chain: Ribose 1,5-bisphosphate phosphokinase PhnN (410 aa).

A unknown region spans residues Met1–Ser220. Residues Met221–Leu410 are ribose 1,5-bisphosphokinase. Gly233–Asp240 contributes to the ATP binding site.

This sequence in the C-terminal section; belongs to the ribose 1,5-bisphosphokinase family.

The enzyme catalyses alpha-D-ribose 1,5-bisphosphate + ATP = 5-phospho-alpha-D-ribose 1-diphosphate + ADP. Its pathway is metabolic intermediate biosynthesis; 5-phospho-alpha-D-ribose 1-diphosphate biosynthesis; 5-phospho-alpha-D-ribose 1-diphosphate from D-ribose 5-phosphate (route II): step 3/3. Catalyzes the phosphorylation of ribose 1,5-bisphosphate to 5-phospho-D-ribosyl alpha-1-diphosphate (PRPP). The protein is Ribose 1,5-bisphosphate phosphokinase PhnN (phnN) of Laribacter hongkongensis (strain HLHK9).